We begin with the raw amino-acid sequence, 50 residues long: Protein PsbN (50 aa).

A helical membrane pass occupies residues 14 to 34 (VAVTILAVLLALTGFGLWTAF).

This sequence belongs to the PsbN family.

It localises to the cellular thylakoid membrane. Functionally, may play a role in photosystem I and II biogenesis. This Prochlorococcus marinus subsp. pastoris (strain CCMP1986 / NIES-2087 / MED4) protein is Protein PsbN.